Here is a 102-residue protein sequence, read N- to C-terminus: ATP-dependent Clp protease adapter protein ClpS (102 aa).

Residues 1-18 (MSQFDHQHLSDTEEKQEL) are compositionally biased toward basic and acidic residues. The segment at 1-21 (MSQFDHQHLSDTEEKQELKPP) is disordered.

Belongs to the ClpS family. As to quaternary structure, binds to the N-terminal domain of the chaperone ClpA.

Its function is as follows. Involved in the modulation of the specificity of the ClpAP-mediated ATP-dependent protein degradation. The polypeptide is ATP-dependent Clp protease adapter protein ClpS (Idiomarina loihiensis (strain ATCC BAA-735 / DSM 15497 / L2-TR)).